A 231-amino-acid polypeptide reads, in one-letter code: Orotidine 5'-phosphate decarboxylase (231 aa).

Substrate is bound by residues D11, K33, 60–69, T117, R179, Q187, G207, and R208; that span reads DLKLHDIPNT. K62 functions as the Proton donor in the catalytic mechanism.

This sequence belongs to the OMP decarboxylase family. Type 1 subfamily. As to quaternary structure, homodimer.

It carries out the reaction orotidine 5'-phosphate + H(+) = UMP + CO2. The protein operates within pyrimidine metabolism; UMP biosynthesis via de novo pathway; UMP from orotate: step 2/2. Functionally, catalyzes the decarboxylation of orotidine 5'-monophosphate (OMP) to uridine 5'-monophosphate (UMP). This is Orotidine 5'-phosphate decarboxylase from Ehrlichia chaffeensis (strain ATCC CRL-10679 / Arkansas).